Consider the following 324-residue polypeptide: Acetyl-coenzyme A carboxylase carboxyl transferase subunit alpha (324 aa).

The CoA carboxyltransferase C-terminal domain maps to 44 to 297; sequence LEERAKQLRY…KAALLRNLAE (254 aa).

Belongs to the AccA family. As to quaternary structure, acetyl-CoA carboxylase is a heterohexamer composed of biotin carboxyl carrier protein (AccB), biotin carboxylase (AccC) and two subunits each of ACCase subunit alpha (AccA) and ACCase subunit beta (AccD).

Its subcellular location is the cytoplasm. The catalysed reaction is N(6)-carboxybiotinyl-L-lysyl-[protein] + acetyl-CoA = N(6)-biotinyl-L-lysyl-[protein] + malonyl-CoA. Its pathway is lipid metabolism; malonyl-CoA biosynthesis; malonyl-CoA from acetyl-CoA: step 1/1. Functionally, component of the acetyl coenzyme A carboxylase (ACC) complex. First, biotin carboxylase catalyzes the carboxylation of biotin on its carrier protein (BCCP) and then the CO(2) group is transferred by the carboxyltransferase to acetyl-CoA to form malonyl-CoA. The sequence is that of Acetyl-coenzyme A carboxylase carboxyl transferase subunit alpha from Thermosynechococcus vestitus (strain NIES-2133 / IAM M-273 / BP-1).